The primary structure comprises 735 residues: Transcription factor RFX4 (735 aa).

Residues 25–59 are disordered; that stretch reads SESKRFSSHSSIGNISNDENEEKENNRASKPHSTP. Residues 44 to 126 mediate DNA binding; sequence NEEKENNRAS…RRLGTRGQSK (83 aa). Residues 61 to 136 constitute a DNA-binding region (RFX-type winged-helix); it reads TLQWLEENYE…YHYYGIAVKE (76 aa). Positions 315 to 487 are necessary for dimerization; it reads RFSQILKRQT…NELMRAMKGE (173 aa).

Belongs to the RFX family.

The protein localises to the nucleus. May activate transcription by interacting directly with the X-box. In Danio rerio (Zebrafish), this protein is Transcription factor RFX4 (rfx4).